We begin with the raw amino-acid sequence, 451 residues long: CBL-interacting protein kinase 10 (451 aa).

The 255-residue stretch at Tyr-13 to Phe-267 folds into the Protein kinase domain. ATP contacts are provided by residues Leu-19–Val-27 and Lys-42. Catalysis depends on Asp-135, which acts as the Proton acceptor. The activation loop stretch occupies residues Asp-153 to Glu-182. The NAF domain maps to Ile-304 to Glu-336. Residues Lys-341–Phe-370 form a PPI region.

This sequence belongs to the protein kinase superfamily. CAMK Ser/Thr protein kinase family. SNF1 subfamily. The cofactor is Mn(2+).

The catalysed reaction is L-seryl-[protein] + ATP = O-phospho-L-seryl-[protein] + ADP + H(+). The enzyme catalyses L-threonyl-[protein] + ATP = O-phospho-L-threonyl-[protein] + ADP + H(+). Functionally, CIPK serine-threonine protein kinases interact with CBL proteins. Binding of a CBL protein to the regulatory NAF domain of CIPK protein lead to the activation of the kinase in a calcium-dependent manner. In Oryza sativa subsp. japonica (Rice), this protein is CBL-interacting protein kinase 10 (CIPK10).